The following is a 381-amino-acid chain: Class E basic helix-loop-helix protein 22 (381 aa).

3 disordered regions span residues 30–94 (RLEA…GGGG), 135–154 (RGSV…DSDG), and 188–242 (HLHG…EQKA). Residues 82-94 (GGGGGSAGSGGGG) are compositionally biased toward gly residues. A compositionally biased stretch (gly residues) spans 198–225 (GGLGGGGGGGSSSGSSGGGGGSGSGSGG). In terms of domain architecture, bHLH spans 242-296 (ALRLNINARERRRMHDLNDALDELRAVIPYAHSPSVRKLSKIATLLLAKNYILMQ).

Interacts with PRDM8. In terms of tissue distribution, brain-specific, with the highest expression in the cerebellum.

It is found in the nucleus. Its function is as follows. Inhibits DNA binding of TCF3/E47 homodimers and TCF3 (E47)/NEUROD1 heterodimers and acts as a strong repressor of Neurod1 and Myod-responsive genes, probably by heterodimerization with class a basic helix-loop-helix factors. Despite the presence of an intact basic domain, does not bind to DNA. In the brain, may function as an area-specific transcription factor that regulates the postmitotic acquisition of area identities and elucidate the genetic hierarchy between progenitors and postmitotic neurons driving neocortical arealization. May be required for the survival of a specific population of inhibitory neurons in the superficial laminae of the spinal cord dorsal horn that may regulate pruritis. Seems to play a crucial role in the retinogenesis, in the specification of amacrine and bipolar subtypes. Forms with PRDM8 a transcriptional repressor complex controlling genes involved in neural development and neuronal differentiation. The polypeptide is Class E basic helix-loop-helix protein 22 (BHLHE22) (Homo sapiens (Human)).